The following is a 320-amino-acid chain: Tryptophan--tRNA ligase (320 aa).

ATP-binding positions include 8–10 (QPT) and 16–17 (GN). The short motif at 9–17 (PTGRPHWGN) is the 'HIGH' region element. D131 is an L-tryptophan binding site. Residues 143–145 (GVD), V182, and 189–193 (KMSKS) each bind ATP. Residues 189–193 (KMSKS) carry the 'KMSKS' region motif.

Belongs to the class-I aminoacyl-tRNA synthetase family. As to quaternary structure, homodimer.

Its subcellular location is the cytoplasm. The enzyme catalyses tRNA(Trp) + L-tryptophan + ATP = L-tryptophyl-tRNA(Trp) + AMP + diphosphate + H(+). Catalyzes the attachment of tryptophan to tRNA(Trp). This chain is Tryptophan--tRNA ligase, found in Rhodopirellula baltica (strain DSM 10527 / NCIMB 13988 / SH1).